We begin with the raw amino-acid sequence, 953 residues long: Nucleotide-binding oligomerization domain-containing protein 1 (953 aa).

Residues 15-105 (ESHPHIQLLK…AYVDLRPWLL (91 aa)) enclose the CARD domain. The region spanning 196-531 (ETIFILGDAG…AFFTAFFLVL (336 aa)) is the NACHT domain. 202-209 (GDAGVGKS) is an ATP binding site. 2 S-palmitoyl cysteine lipidation sites follow: Cys-558 and Cys-567. LRR repeat units lie at residues 632 to 656 (LKSLPRVQVESFNQVQAMPTFIWML), 702 to 725 (FPKRLALDLDNNNLNDYGVRELQP), 727 to 750 (FSRLTVLRLSVNQITDGGVKVLSE), 755 to 778 (YKIVTYLGLYNNQITDVGARYVTK), 783 to 806 (CKGLTHLKLGKNKITSEGGKYLAL), 839 to 862 (HPSLTTLSLASNGISTEGGKSLAR), 867 to 891 (NTSLEILWLTQNELNDEVAESLAEM), 895 to 918 (NQTLKHLWLIQNQITAKGTAQLAD), and 923 to 946 (NTGITEICLNGNLIKPEEAKVYED). Cys-952 carries S-palmitoyl cysteine lipidation.

Belongs to the NOD1-NOD2 family. As to quaternary structure, homooligomer: homooligomerizes following ligand-binding, promoting RIPK2 recruitment. Interacts (via CARD domain) with RIPK2 (via CARD domain). Following RIPK2 recruitment, RIPK2 homooligomerizes via its CARD domain and forms long filaments named RIPosomes. Interacts with ARHGEF2. Interacts (via CARD domain) with ubiquitin; inhibiting interaction with RIPK2. Interacts with NLRP10 and recruits it to the cell membrane following invasive bacterial infection. Interacts with IFIH1; this interaction promotes transcription of antiviral genes and inhibition of viral replication. Interacts with IRGM; promoting NOD1 degradation. Interacts with ATG16L1. Post-translationally, palmitoylated. Palmitoylation is required for proper recruitment to the bacterial entry site and hence for proper signaling upon cognate peptidoglycan detection. Ubiquitinated. 'Lys-48'-linked polyubiquitination by RNF34 promotes proteasomal degradation and thereby negatively regulates NOD1 for instance in NF-kappa-B activation. In terms of processing, degraded via selective autophagy following interaction with IRGM. IRGM promotes NOD1-RIPK2 RIPosome recruitment to autophagosome membranes, promoting their SQSTM1/p62-dependent autophagic degradation. Highly expressed in adult heart, skeletal muscle, pancreas, spleen and ovary. Also detected in placenta, lung, liver, kidney, thymus, testis, small intestine and colon.

The protein localises to the cell membrane. It is found in the apical cell membrane. Its subcellular location is the basolateral cell membrane. It localises to the cytoplasm. Its function is as follows. Pattern recognition receptor (PRR) that detects bacterial peptidoglycan fragments and other danger signals and thus participates in both innate and adaptive immune responses. Specifically recognizes and binds gamma-D-glutamyl-meso-diaminopimelic acid (iE-DAP), a dipeptide present in peptidoglycan of Gram-negative bacteria. Preferentially binds iE-DAP in tripeptide-containing muropeptides (MurNAc-TriDAP or TriDAP). Ligand binding triggers oligomerization that facilitates the binding and subsequent activation of the proximal adapter receptor-interacting RIPK2. Following recruitment, RIPK2 undergoes 'Met-1'- (linear) and 'Lys-63'-linked polyubiquitination by E3 ubiquitin-protein ligases XIAP, BIRC2, BIRC3 and the LUBAC complex, becoming a scaffolding protein for downstream effectors, triggering activation of the NF-kappa-B and MAP kinases signaling. This in turn leads to the transcriptional activation of hundreds of genes involved in immune response. Also acts as a regulator of antiviral response elicited by dsRNA and the expression of RLR pathway members by targeting IFIH1 and TRAF3 to modulate the formation of IFIH1-MAVS and TRAF3-MAVS complexes leading to increased transcription of type I IFNs. Also acts as a regulator of autophagy via its interaction with ATG16L1, possibly by recruiting ATG16L1 at the site of bacterial entry. Besides recognizing pathogens, also involved in the endoplasmic reticulum stress response: acts by sensing and binding to the cytosolic metabolite sphingosine-1-phosphate generated in response to endoplasmic reticulum stress, initiating an inflammation process that leads to activation of the NF-kappa-B and MAP kinases signaling. In addition, plays a role in insulin trafficking in beta cells in a cell-autonomous manner. Mechanistically, upon recognizing cognate ligands, NOD1 and RIPK2 localize to insulin vesicles where they recruit RAB1A to direct insulin trafficking through the cytoplasm. Functionally, in contrast to isoform 1, does not efficiently recognize and bind gamma-D-glutamyl-meso-diaminopimelic acid (iE-DAP) ligand. This chain is Nucleotide-binding oligomerization domain-containing protein 1, found in Homo sapiens (Human).